The sequence spans 480 residues: UDP-N-acetylmuramate--L-alanine ligase (480 aa).

129–135 contacts ATP; that stretch reads GTHGKTT.

It belongs to the MurCDEF family.

The protein resides in the cytoplasm. The enzyme catalyses UDP-N-acetyl-alpha-D-muramate + L-alanine + ATP = UDP-N-acetyl-alpha-D-muramoyl-L-alanine + ADP + phosphate + H(+). It functions in the pathway cell wall biogenesis; peptidoglycan biosynthesis. Cell wall formation. The polypeptide is UDP-N-acetylmuramate--L-alanine ligase (Mannheimia succiniciproducens (strain KCTC 0769BP / MBEL55E)).